The sequence spans 487 residues: Ribosome biogenesis protein YTM1 (487 aa).

Residues 13-95 (VKVTFTTNEA…ETNLTLQYVR (83 aa)) are ubiquitin-like (UBL) domain. WD repeat units lie at residues 122–161 (SPAGRWSGENFSRGQERILSASYDGLLRIWNASGEVLVTA), 168–206 (GHSASIKAAKFISSTQIASTGMDRSVRVWKYTDPGASGQ), 217–256 (GHRASVDSLEVHGPSKRILTASADGSVALWSASKSSSPEA), 379–419 (GHTN…PASG), and 451–487 (GEGAKVFGVVWDRELGILSGGEDKKVQVNRGRDVVRE). A disordered region spans residues 253-277 (SPEADASLLPNAHTSKRRKVASSVT).

The protein belongs to the WD repeat WDR12/YTM1 family. As to quaternary structure, component of the NOP7 complex, composed of ERB1, NOP7 and YTM1. The complex is held together by ERB1, which interacts with NOP7 via its N-terminal domain and with YTM1 via a high-affinity interaction between the seven-bladed beta-propeller domains of the 2 proteins. The NOP7 complex associates with the 66S pre-ribosome. Interacts (via UBL domain) with MDN1 (via VWFA/MIDAS domain).

It is found in the nucleus. The protein resides in the nucleolus. The protein localises to the nucleoplasm. Functionally, component of the NOP7 complex, which is required for maturation of the 25S and 5.8S ribosomal RNAs and formation of the 60S ribosome. This chain is Ribosome biogenesis protein YTM1, found in Podospora anserina (strain S / ATCC MYA-4624 / DSM 980 / FGSC 10383) (Pleurage anserina).